The following is a 447-amino-acid chain: Argininosuccinate synthase (447 aa).

ATP contacts are provided by residues 20–28 (AFSGGLDTS) and A46. Y102 contributes to the L-citrulline binding site. The ATP site is built by G132 and T134. The L-aspartate site is built by T134, N138, and D139. N138 contacts L-citrulline. D139 serves as a coordination point for ATP. 2 residues coordinate L-citrulline: R142 and S195. D197 provides a ligand contact to ATP. L-citrulline is bound by residues T204, E206, and E283.

It belongs to the argininosuccinate synthase family. Type 2 subfamily. As to quaternary structure, homotetramer.

The protein localises to the cytoplasm. It carries out the reaction L-citrulline + L-aspartate + ATP = 2-(N(omega)-L-arginino)succinate + AMP + diphosphate + H(+). It participates in amino-acid biosynthesis; L-arginine biosynthesis; L-arginine from L-ornithine and carbamoyl phosphate: step 2/3. This is Argininosuccinate synthase (argG) from Neisseria meningitidis serogroup B (strain ATCC BAA-335 / MC58).